Consider the following 613-residue polypeptide: Penicillin-binding protein activator LpoA (613 aa).

Positions M1–G29 are cleaved as a signal peptide. C30 carries the N-palmitoyl cysteine lipid modification. C30 is lipidated: S-diacylglycerol cysteine.

It belongs to the LpoA family. As to quaternary structure, interacts with PBP1a.

It localises to the cell outer membrane. Regulator of peptidoglycan synthesis that is essential for the function of penicillin-binding protein 1A (PBP1a). This Photobacterium profundum (strain SS9) protein is Penicillin-binding protein activator LpoA.